A 345-amino-acid chain; its full sequence is Phosphoribosylformylglycinamidine cyclo-ligase (345 aa).

The protein belongs to the AIR synthase family.

It is found in the cytoplasm. It carries out the reaction 2-formamido-N(1)-(5-O-phospho-beta-D-ribosyl)acetamidine + ATP = 5-amino-1-(5-phospho-beta-D-ribosyl)imidazole + ADP + phosphate + H(+). It functions in the pathway purine metabolism; IMP biosynthesis via de novo pathway; 5-amino-1-(5-phospho-D-ribosyl)imidazole from N(2)-formyl-N(1)-(5-phospho-D-ribosyl)glycinamide: step 2/2. This Escherichia coli (strain K12 / MC4100 / BW2952) protein is Phosphoribosylformylglycinamidine cyclo-ligase.